A 308-amino-acid chain; its full sequence is Porphobilinogen deaminase (308 aa).

C241 is subject to S-(dipyrrolylmethanemethyl)cysteine.

The protein belongs to the HMBS family. In terms of assembly, monomer. Requires dipyrromethane as cofactor.

The catalysed reaction is 4 porphobilinogen + H2O = hydroxymethylbilane + 4 NH4(+). Its pathway is porphyrin-containing compound metabolism; protoporphyrin-IX biosynthesis; coproporphyrinogen-III from 5-aminolevulinate: step 2/4. Functionally, tetrapolymerization of the monopyrrole PBG into the hydroxymethylbilane pre-uroporphyrinogen in several discrete steps. The chain is Porphobilinogen deaminase from Staphylococcus aureus (strain MSSA476).